A 614-amino-acid chain; its full sequence is Zinc metalloproteinase dpy-31 (614 aa).

An N-terminal signal peptide occupies residues 1-24 (MSLLRCTTLLLVVVAIALPPCILG). The propeptide occupies 25 to 150 (YSLHDGSRLD…KTGQRRVKRK (126 aa)). Positions 150 to 349 (KFIGSDLRRW…IRLMNKIYCS (200 aa)) constitute a Peptidase M12A domain. N-linked (GlcNAc...) asparagine glycosylation is present at Asn190. 5 disulfide bridges follow: Cys193-Cys348, Cys216-Cys237, Cys352-Cys372, Cys374-Cys383, and Cys394-Cys422. His245 contributes to the Zn(2+) binding site. Glu246 is a catalytic residue. Zn(2+)-binding residues include His249 and His255. Residues 344–384 (NKIYCSNVCSRKLPCQRGGYTDPRRCDRCRCPDGFTGQFCE) form the EGF-like domain. The 117-residue stretch at 394–510 (CGGRIQVNGG…RGFEARARAL (117 aa)) folds into the CUB domain. A glycan (N-linked (GlcNAc...) asparagine) is linked at Asn461. Residues 513–562 (NGQWASWSPWTPCTASCGACGSRMRTRVCSHGACAGEPVENQVCNTHPCN) form the TSP type-1 domain. 3 disulfide bridges follow: Cys525–Cys556, Cys529–Cys561, and Cys541–Cys546.

Requires Zn(2+) as cofactor.

It localises to the secreted. With respect to regulation, inhibited by marimastat and tripeptide hydroxamic acids. Inhibited by 1,10-phenanthroline. Its function is as follows. Metalloprotease which cleaves the carboxyl terminus of procollagens to mature collagens. Probably involved in cuticular collagen maturation. The polypeptide is Zinc metalloproteinase dpy-31 (Teladorsagia circumcincta (Brown stomach worm)).